The chain runs to 234 residues: Endonuclease NucS (234 aa).

Belongs to the NucS endonuclease family.

The protein localises to the cytoplasm. Its function is as follows. Cleaves both 3' and 5' ssDNA extremities of branched DNA structures. This is Endonuclease NucS from Bifidobacterium animalis subsp. lactis (strain AD011).